Here is a 304-residue protein sequence, read N- to C-terminus: Pseudouridine-5'-phosphate glycosidase (304 aa).

Residue E25 is the Proton donor of the active site. Positions 88 and 108 each coordinate substrate. A Mn(2+)-binding site is contributed by D140. Residue 142 to 144 participates in substrate binding; it reads SAD. K161 serves as the catalytic Nucleophile.

Belongs to the pseudouridine-5'-phosphate glycosidase family. Homotrimer. It depends on Mn(2+) as a cofactor.

It carries out the reaction D-ribose 5-phosphate + uracil = psi-UMP + H2O. Catalyzes the reversible cleavage of pseudouridine 5'-phosphate (PsiMP) to ribose 5-phosphate and uracil. Functions biologically in the cleavage direction, as part of a pseudouridine degradation pathway. The protein is Pseudouridine-5'-phosphate glycosidase of Paracoccus denitrificans (strain Pd 1222).